The sequence spans 351 residues: Transmembrane protein DDB_G0272716 (351 aa).

N-linked (GlcNAc...) asparagine glycosylation is found at Asn-4 and Asn-59. The next 2 helical transmembrane spans lie at Phe-175–Gly-195 and Val-215–Ile-235. Residue Asn-345 is glycosylated (N-linked (GlcNAc...) asparagine).

Its subcellular location is the membrane. This chain is Transmembrane protein DDB_G0272716, found in Dictyostelium discoideum (Social amoeba).